The following is a 278-amino-acid chain: Imidazole glycerol phosphate synthase subunit HisF (278 aa).

Catalysis depends on residues Asp-11 and Asp-130.

It belongs to the HisA/HisF family. In terms of assembly, heterodimer of HisH and HisF.

The protein localises to the cytoplasm. The enzyme catalyses 5-[(5-phospho-1-deoxy-D-ribulos-1-ylimino)methylamino]-1-(5-phospho-beta-D-ribosyl)imidazole-4-carboxamide + L-glutamine = D-erythro-1-(imidazol-4-yl)glycerol 3-phosphate + 5-amino-1-(5-phospho-beta-D-ribosyl)imidazole-4-carboxamide + L-glutamate + H(+). It functions in the pathway amino-acid biosynthesis; L-histidine biosynthesis; L-histidine from 5-phospho-alpha-D-ribose 1-diphosphate: step 5/9. In terms of biological role, IGPS catalyzes the conversion of PRFAR and glutamine to IGP, AICAR and glutamate. The HisF subunit catalyzes the cyclization activity that produces IGP and AICAR from PRFAR using the ammonia provided by the HisH subunit. The sequence is that of Imidazole glycerol phosphate synthase subunit HisF from Thermodesulfovibrio yellowstonii (strain ATCC 51303 / DSM 11347 / YP87).